We begin with the raw amino-acid sequence, 420 residues long: Histidine--tRNA ligase (420 aa).

This sequence belongs to the class-II aminoacyl-tRNA synthetase family. As to quaternary structure, homodimer.

The protein localises to the cytoplasm. The catalysed reaction is tRNA(His) + L-histidine + ATP = L-histidyl-tRNA(His) + AMP + diphosphate + H(+). The sequence is that of Histidine--tRNA ligase from Thermotoga petrophila (strain ATCC BAA-488 / DSM 13995 / JCM 10881 / RKU-1).